A 626-amino-acid chain; its full sequence is Chaperone protein HtpG (626 aa).

The segment at 1–339 (MSQNQETRGF…SNDLPLNVSR (339 aa)) is a; substrate-binding. A b region spans residues 340 to 555 (EILQDNKITA…NDQMTTQMAK (216 aa)). The segment at 556–626 (LFAAAGQPVP…FIKRINKLLG (71 aa)) is c.

Belongs to the heat shock protein 90 family. In terms of assembly, homodimer.

It is found in the cytoplasm. Molecular chaperone. Has ATPase activity. The sequence is that of Chaperone protein HtpG from Haemophilus influenzae (strain 86-028NP).